We begin with the raw amino-acid sequence, 475 residues long: MKYEAVIGLEVHAELLTDSKIFCGCSTKFGSEPNTQVCPVCLGLPGTLPVLNKKVVEYAVRAGLALNCTIANFSKMDRKNYFYPDLPKAYQISQYDLPLCSNGYIEIEVEGGTKRIGIKRIHIEEDAGKLLHEGTDGSLVDYNRAGVPLIEIVSEPDISTPEEAYQYLVKLKSILEYTEVSDCKMQEGSLRVDTNVSVRPVGTTELGTKIELKNLNSFKAVQKALEYEIKRQIKVLEEGGTIVQETRRWNEAKGITEPMRTKEEAHDYRYFPEPDLVPIIVTEEWKEEIRKTLPEMPDAKRERFITQYGLPEYDAKVITSSKKMADFFEKCASNYHSPKIVSNWLMGEFARLLNDTGKEIDEVPITPDMLIELLKLVDDNVISGSIAKTVFEEMFFTGKNPQIIVEEKGLRQIADEGELRRIVRKVIEENPKSVEDYKKGKEKALGFLVGQVMKETKGKANPQLTNQLLREELSK.

The protein belongs to the GatB/GatE family. GatB subfamily. As to quaternary structure, heterotrimer of A, B and C subunits.

It catalyses the reaction L-glutamyl-tRNA(Gln) + L-glutamine + ATP + H2O = L-glutaminyl-tRNA(Gln) + L-glutamate + ADP + phosphate + H(+). The catalysed reaction is L-aspartyl-tRNA(Asn) + L-glutamine + ATP + H2O = L-asparaginyl-tRNA(Asn) + L-glutamate + ADP + phosphate + 2 H(+). In terms of biological role, allows the formation of correctly charged Asn-tRNA(Asn) or Gln-tRNA(Gln) through the transamidation of misacylated Asp-tRNA(Asn) or Glu-tRNA(Gln) in organisms which lack either or both of asparaginyl-tRNA or glutaminyl-tRNA synthetases. The reaction takes place in the presence of glutamine and ATP through an activated phospho-Asp-tRNA(Asn) or phospho-Glu-tRNA(Gln). This Caldanaerobacter subterraneus subsp. tengcongensis (strain DSM 15242 / JCM 11007 / NBRC 100824 / MB4) (Thermoanaerobacter tengcongensis) protein is Aspartyl/glutamyl-tRNA(Asn/Gln) amidotransferase subunit B.